We begin with the raw amino-acid sequence, 312 residues long: Olfactory receptor 2M3 (312 aa).

Topologically, residues 1-25 (MARENSTFNSDFILLGIFNHSPTHT) are extracellular. A glycan (N-linked (GlcNAc...) asparagine) is linked at asparagine 5. A helical transmembrane segment spans residues 26–49 (FLFFLVLAIFSVAFMGNSVMVLLI). At 50–57 (YLDTQLHT) the chain is on the cytoplasmic side. The chain crosses the membrane as a helical span at residues 58 to 79 (PMYLLLSQLSLMDLMLICTTVP). Residues 80–100 (KMAFNYLSGSKSISMAGCATQ) lie on the Extracellular side of the membrane. A disulfide bridge connects residues cysteine 97 and cysteine 189. Residues 101-120 (IFFYTSLLGSECFLLAVMAY) traverse the membrane as a helical segment. At 121–139 (DRYTAICHPLRYTNLMSPK) the chain is on the cytoplasmic side. A helical membrane pass occupies residues 140-158 (ICGLMTAFSWILGSTDGII). Residues 159 to 195 (DVVATFSFSYCGSREIAHFFCDFPSLLILSCSDTSIF) lie on the Extracellular side of the membrane. A helical membrane pass occupies residues 196–219 (EKILFICCIVMIVFPVAIIIASYA). Topologically, residues 220 to 236 (RVILAVIHMGSGEGRRK) are cytoplasmic. The chain crosses the membrane as a helical span at residues 237-259 (AFTTCSSHLLVVGMYYGAALFMY). The Extracellular segment spans residues 260–272 (IRPTSDRSPTQDK). The helical transmembrane segment at 273–292 (MVSVFYTILTPMLNPLIYSL) threads the bilayer. Topologically, residues 293 to 312 (RNKEVTRAFMKILGKGKSGE) are cytoplasmic.

This sequence belongs to the G-protein coupled receptor 1 family.

It localises to the cell membrane. Functionally, odorant receptor. This chain is Olfactory receptor 2M3 (OR2M3), found in Homo sapiens (Human).